The sequence spans 241 residues: GLIPR1-like protein 1 (241 aa).

An N-terminal signal peptide occupies residues 1–22; it reads MILRKKLSYLWTLGLCLVASKS. Residues 39–172 enclose the SCP domain; it reads LRLHNEARTN…PDSALLVCNY (134 aa). A lipid anchor (GPI-anchor amidated serine) is attached at S220. The propeptide at 221–241 is removed in mature form; sequence GTRQLIACNPLYLISVLLTIF.

The protein belongs to the CRISP family. In terms of assembly, part of a oolemmal binding multimeric complex (IZUMO1 complex) composed at least of IZUMO1 and GLIPR1L1; the complex assemblage is influenced by the maturation status of the male germ cell. Interacts with IZUMO1. In terms of processing, N-glycosylated. N-glycosylation decreases during the transit in the caput. Highly expressed in testis, where it localizes to round and elongating spermatids and differentiated spermatozoa in the seminiferous tubules and epididymis (at protein level).

It localises to the cytoplasmic vesicle. The protein localises to the secretory vesicle. Its subcellular location is the acrosome. The protein resides in the cell membrane. It is found in the membrane raft. Its function is as follows. Required for optimal fertilization at the stage of sperm-oocyte fusion, plays a role in optimizing acrosome function, the translocation of IZUMO1 during the acrosome reaction and the fertilization process. Component of epididymosomes, one type of membranous microvesicules which mediate the transfer of lipids and proteins to spermatozoa plasma membrane during epididymal maturation. Also a component of the CD9-positive microvesicules found in the cauda region. In Bos taurus (Bovine), this protein is GLIPR1-like protein 1.